The following is a 96-amino-acid chain: ESAT-6-like protein SAG1039 (96 aa).

The protein belongs to the WXG100 family. sagEsxA-like subfamily. As to quaternary structure, homodimer.

The sequence is that of ESAT-6-like protein SAG1039 from Streptococcus agalactiae serotype V (strain ATCC BAA-611 / 2603 V/R).